The primary structure comprises 327 residues: Phenylalanine--tRNA ligase alpha subunit (327 aa).

E253 serves as a coordination point for Mg(2+).

The protein belongs to the class-II aminoacyl-tRNA synthetase family. Phe-tRNA synthetase alpha subunit type 1 subfamily. Tetramer of two alpha and two beta subunits. It depends on Mg(2+) as a cofactor.

It is found in the cytoplasm. The catalysed reaction is tRNA(Phe) + L-phenylalanine + ATP = L-phenylalanyl-tRNA(Phe) + AMP + diphosphate + H(+). The sequence is that of Phenylalanine--tRNA ligase alpha subunit from Laribacter hongkongensis (strain HLHK9).